A 337-amino-acid chain; its full sequence is Tryptophan--tRNA ligase (337 aa).

Residues 11–13 (QPT) and 19–20 (GN) contribute to the ATP site. Positions 12 to 20 (PTGALHLGN) match the 'HIGH' region motif. An L-tryptophan-binding site is contributed by Asp-135. ATP contacts are provided by residues 147–149 (GED), Val-191, and 200–204 (KMSKS). Residues 200–204 (KMSKS) carry the 'KMSKS' region motif.

It belongs to the class-I aminoacyl-tRNA synthetase family. In terms of assembly, homodimer.

The protein resides in the cytoplasm. The catalysed reaction is tRNA(Trp) + L-tryptophan + ATP = L-tryptophyl-tRNA(Trp) + AMP + diphosphate + H(+). Its function is as follows. Catalyzes the attachment of tryptophan to tRNA(Trp). The chain is Tryptophan--tRNA ligase from Prochlorococcus marinus (strain MIT 9313).